Reading from the N-terminus, the 409-residue chain is MGQKARSAAAALAVASSEQKNNALEMIALSLEAHSDEILRANCLDLEKATQNNLKAAMVDRLKLDELRLAAMIDSVRQVARLSDPVGQIMSAWTRPNGLHISRVRTPLGVIGIIYESRPNVTIDASSLCLKAGNAVILRGGSDSFHSSYALHCALVQGLEHSGLPKSAIQMVGTTDRAAVGEILKGLDGAIDVIVPRGGKSLVARVQSDARVPVFAHLEGLCHIYIDKSADLDMARNIVLNAKLRRTGICGAVETVLIDNEALKKFLPVLTALQEKGCEIRATEDIAFLVPDVKLASEEDWSHEYLDAILSVKTVEGVEGAISHIKRYSSGHTESIIAEDMEVVKKFFNHLDSAILLHNASTQFADGGEFGFGMEIGIATGKMHARGPIGVEQLTSFQYHIKGNGQVRA.

Belongs to the gamma-glutamyl phosphate reductase family.

Its subcellular location is the cytoplasm. It carries out the reaction L-glutamate 5-semialdehyde + phosphate + NADP(+) = L-glutamyl 5-phosphate + NADPH + H(+). Its pathway is amino-acid biosynthesis; L-proline biosynthesis; L-glutamate 5-semialdehyde from L-glutamate: step 2/2. Catalyzes the NADPH-dependent reduction of L-glutamate 5-phosphate into L-glutamate 5-semialdehyde and phosphate. The product spontaneously undergoes cyclization to form 1-pyrroline-5-carboxylate. The chain is Gamma-glutamyl phosphate reductase from Bartonella tribocorum (strain CIP 105476 / IBS 506).